A 537-amino-acid chain; its full sequence is MKMLTEHFDFPKLNFATIVISGATIIGIIFLRYLNYPTKVNVPVVGIGVRYTKWLAAIINVRHARQSIREGYAKYGDFAFQIPTMTRMEVFICDRQMTREYQNVDDYHLSFRAVMTEEFQFKWLLPGQAHEARIIPNSVIAKALSWQRTRANKPSDPFFESFSAEFMQGFQEEMRRLIQYQNSSVMSNRSGAVLDPAHGWHAVPCFPLALKVIGRLTTYVLFGKPLCQDATFLNMCCQFGDVIPRDAIILRSWPALARPLIVKILSAPRVMGKLRNILIVEIKSRRESHETNPMSDILDFTMAWVDRHPNASFDDQHIAEMMINTIFAALHTSSQLVVHTIFELASRPEYSDALLEEIDACFEKHGKGTKAALDSMFKVDSFIKETQRFNPLDASALARLALKDFTFSNGLNIPKGSVIFTPNSPIFEDERYYKDPKVFDGFRFARMRNDPKLGLFCDLTATNEQSMHFGTGRHACPGRFMVSDEVKLAVIHILSNFDFCIENFGPRPANQPFGKFLLPDMSAKIWLREKRAREKNL.

Residues 10 to 30 traverse the membrane as a helical segment; the sequence is FPKLNFATIVISGATIIGIIF. N-linked (GlcNAc...) asparagine glycosylation is found at Asn-182, Asn-188, and Asn-310. Residue Cys-476 coordinates heme.

This sequence belongs to the cytochrome P450 family. Requires heme as cofactor.

The protein resides in the membrane. The protein operates within secondary metabolite biosynthesis. Cytochrome P450 monooxygenase; part of the gene clusters that mediates the biosynthesis of lolitrems, indole-diterpene mycotoxins that are potent tremorgens in mammals, and are synthesized by clavicipitaceous fungal endophytes in association with their grass hosts. The geranylgeranyl diphosphate (GGPP) synthase ltmG is proposed to catalyze the first step in lolitrem biosynthesis. LtmG catalyzes a series of iterative condensations of isopentenyl diphosphate (IPP) with dimethylallyl diphosphate (DMAPP), geranyl diphosphate (GPP), and farnesyl diphosphate (FPP), to form GGPP. GGPP then condenses with indole-3-glycerol phosphate to form 3-geranylgeranylindole, an acyclic intermediate, to be incorporated into paxilline. Either ltmG or ltmC could be responsible for this step, as both are putative prenyl transferases. The FAD-dependent monooxygenase ltmM then catalyzes the epoxidation of the two terminal alkenes of the geranylgeranyl moiety, which is subsequently cyclized by ltmB, to paspaline. The cytochrome P450 monooxygenases ltmQ and ltmP can sequentially oxidize paspaline to terpendole E and terpendole F. Alternatively, ltmP converts paspaline to an intermediate which is oxidized by ltmQ to terpendole F. LtmF, ltmK, ltmE and ltmJ appear to be unique to the epichloe endophytes. The prenyltransferase ltmF is involved in the 27-hydroxyl-O-prenylation. The cytochrome P450 monooxygenase ltmK is required for the oxidative acetal ring formation. The multi-functional prenyltransferase ltmE is required for C20- and C21-prenylations of the indole ring of paspalanes and acts together with the cytochrome P450 monooxygenase ltmJ to yield lolitremanes by multiple oxidations and ring closures. The stereoisomer pairs of lolitriol and lolitrem N or lolitrem B and lolitrem F may be attributed to variations in the way in which ring closure can occur under the action of ltmJ. While the major product of this pathway is lolitrem B, the prenyl transferases and cytochrome P450 monooxygenases identified in this pathway have a remarkable versatility in their regio- and stereo-specificities to generate a diverse range of metabolites that are products of a metabolic grid rather than a linear pathway. This is Cytochrome P450 monooxygenase ltmQ from Epichloe festucae var. lolii (Neotyphodium lolii).